A 296-amino-acid chain; its full sequence is Phosphatidylserine decarboxylase proenzyme (296 aa).

Active-site charge relay system; for autoendoproteolytic cleavage activity residues include Asp-92, His-149, and Ser-251. Catalysis depends on Ser-251, which acts as the Schiff-base intermediate with substrate; via pyruvic acid; for decarboxylase activity. A Pyruvic acid (Ser); by autocatalysis modification is found at Ser-251.

The protein belongs to the phosphatidylserine decarboxylase family. PSD-B subfamily. Prokaryotic type I sub-subfamily. In terms of assembly, heterodimer of a large membrane-associated beta subunit and a small pyruvoyl-containing alpha subunit. The cofactor is pyruvate. Is synthesized initially as an inactive proenzyme. Formation of the active enzyme involves a self-maturation process in which the active site pyruvoyl group is generated from an internal serine residue via an autocatalytic post-translational modification. Two non-identical subunits are generated from the proenzyme in this reaction, and the pyruvate is formed at the N-terminus of the alpha chain, which is derived from the carboxyl end of the proenzyme. The autoendoproteolytic cleavage occurs by a canonical serine protease mechanism, in which the side chain hydroxyl group of the serine supplies its oxygen atom to form the C-terminus of the beta chain, while the remainder of the serine residue undergoes an oxidative deamination to produce ammonia and the pyruvoyl prosthetic group on the alpha chain. During this reaction, the Ser that is part of the protease active site of the proenzyme becomes the pyruvoyl prosthetic group, which constitutes an essential element of the active site of the mature decarboxylase.

It is found in the cell membrane. The enzyme catalyses a 1,2-diacyl-sn-glycero-3-phospho-L-serine + H(+) = a 1,2-diacyl-sn-glycero-3-phosphoethanolamine + CO2. The protein operates within phospholipid metabolism; phosphatidylethanolamine biosynthesis; phosphatidylethanolamine from CDP-diacylglycerol: step 2/2. Its function is as follows. Catalyzes the formation of phosphatidylethanolamine (PtdEtn) from phosphatidylserine (PtdSer). This chain is Phosphatidylserine decarboxylase proenzyme, found in Hahella chejuensis (strain KCTC 2396).